The primary structure comprises 120 residues: Ribosome-binding factor A (120 aa).

It belongs to the RbfA family. As to quaternary structure, monomer. Binds 30S ribosomal subunits, but not 50S ribosomal subunits or 70S ribosomes.

It localises to the cytoplasm. One of several proteins that assist in the late maturation steps of the functional core of the 30S ribosomal subunit. Associates with free 30S ribosomal subunits (but not with 30S subunits that are part of 70S ribosomes or polysomes). Required for efficient processing of 16S rRNA. May interact with the 5'-terminal helix region of 16S rRNA. The chain is Ribosome-binding factor A from Buchnera aphidicola subsp. Acyrthosiphon pisum (strain 5A).